The following is a 222-amino-acid chain: 7-cyano-7-deazaguanine synthase (222 aa).

8–18 (LSGGMDSTTAA) lines the ATP pocket. The Zn(2+) site is built by Cys187, Cys195, Cys198, and Cys201.

Belongs to the QueC family. It depends on Zn(2+) as a cofactor.

It carries out the reaction 7-carboxy-7-deazaguanine + NH4(+) + ATP = 7-cyano-7-deazaguanine + ADP + phosphate + H2O + H(+). Its pathway is purine metabolism; 7-cyano-7-deazaguanine biosynthesis. Functionally, catalyzes the ATP-dependent conversion of 7-carboxy-7-deazaguanine (CDG) to 7-cyano-7-deazaguanine (preQ(0)). The chain is 7-cyano-7-deazaguanine synthase from Nautilia profundicola (strain ATCC BAA-1463 / DSM 18972 / AmH).